The primary structure comprises 324 residues: MAQITLSAEIQLSQLGQRLDQALAELFPDYSRSRLKTWIEQNLVHVNGDVVNVPRAKVYGGEQIEIVVEIDDDTRFEPENLPLNIVYEDDDILVINKPKDFVVHPGAGNASGTVLNALLYHYPAIAEVPRAGIVHRLDKDTTGLMVIAKTIPAQTKLVRDLQKRKITREYEAIACGIMTKGGMVDQPMARHPTKRTHMAVHPMGKPAVTHYRIMERFRNYTRLRLRLETGRTHQIRVHMAHIAHPLLGDQTYGGRPRPPKNASEELMQTLRDFKRQALHAIMLRLAHPITGELMEWHAPLPTDFVELVEALKADYQLHQDDLDY.

The 74-residue stretch at 17–90 folds into the S4 RNA-binding domain; that stretch reads QRLDQALAEL…LPLNIVYEDD (74 aa). D138 is an active-site residue.

This sequence belongs to the pseudouridine synthase RluA family.

The protein localises to the cytoplasm. It carries out the reaction uridine(1911/1915/1917) in 23S rRNA = pseudouridine(1911/1915/1917) in 23S rRNA. In terms of biological role, responsible for synthesis of pseudouridine from uracil at positions 1911, 1915 and 1917 in 23S ribosomal RNA. This chain is Ribosomal large subunit pseudouridine synthase D (rluD), found in Pasteurella multocida (strain Pm70).